The following is a 125-amino-acid chain: Linear element protein rec27 (125 aa).

A coiled-coil region spans residues 45-104 (KTNIENEKKAFIKDVSQVQQKIKEFEIQKANQIKQLNEEKLSIEARKQQLEIEIRNQLLQ).

Component of linear elements (LinEs), which are similar to synaptonemal complexes, at least composed of rec27, rec25, rec10 and mug20.

It localises to the cytoplasm. The protein localises to the nucleus. It is found in the chromosome. During meiotic DNA recombination, binds to and activates DNA double-strand break (DSB) hotspot sites. In Schizosaccharomyces pombe (strain 972 / ATCC 24843) (Fission yeast), this protein is Linear element protein rec27.